We begin with the raw amino-acid sequence, 953 residues long: UvrABC system protein A (953 aa).

33–40 (GLSGSGKS) provides a ligand contact to ATP. ABC transporter domains lie at 320–599 (WGST…EESI) and 619–949 (GHDN…RYLK). Residue 652–659 (GVSGSGKS) participates in ATP binding. Residues 752–778 (CEACQGDGLIKIEMHFLPDVYVKCDIC) form a C4-type zinc finger.

Belongs to the ABC transporter superfamily. UvrA family. In terms of assembly, forms a heterotetramer with UvrB during the search for lesions.

It is found in the cytoplasm. Functionally, the UvrABC repair system catalyzes the recognition and processing of DNA lesions. UvrA is an ATPase and a DNA-binding protein. A damage recognition complex composed of 2 UvrA and 2 UvrB subunits scans DNA for abnormalities. When the presence of a lesion has been verified by UvrB, the UvrA molecules dissociate. The chain is UvrABC system protein A from Rickettsia prowazekii (strain Madrid E).